Consider the following 132-residue polypeptide: Ribosome-binding factor A (132 aa).

This sequence belongs to the RbfA family. In terms of assembly, monomer. Binds 30S ribosomal subunits, but not 50S ribosomal subunits or 70S ribosomes.

Its subcellular location is the cytoplasm. Its function is as follows. One of several proteins that assist in the late maturation steps of the functional core of the 30S ribosomal subunit. Associates with free 30S ribosomal subunits (but not with 30S subunits that are part of 70S ribosomes or polysomes). Required for efficient processing of 16S rRNA. May interact with the 5'-terminal helix region of 16S rRNA. The chain is Ribosome-binding factor A from Caldicellulosiruptor bescii (strain ATCC BAA-1888 / DSM 6725 / KCTC 15123 / Z-1320) (Anaerocellum thermophilum).